The sequence spans 125 residues: Fluoride-specific ion channel FluC (125 aa).

3 helical membrane passes run 36–56 (GTIFVNVVGSFLLSFLMFLSI), 65–85 (FILFFGTGFLGAFTTFSTFAY), and 99–119 (IIYFIANIFLGFFAAILGMFL). Positions 75 and 78 each coordinate Na(+).

This sequence belongs to the fluoride channel Fluc/FEX (TC 1.A.43) family.

The protein resides in the cell inner membrane. The enzyme catalyses fluoride(in) = fluoride(out). Na(+) is not transported, but it plays an essential structural role and its presence is essential for fluoride channel function. In terms of biological role, fluoride-specific ion channel. Important for reducing fluoride concentration in the cell, thus reducing its toxicity. This is Fluoride-specific ion channel FluC from Thermosipho africanus (strain TCF52B).